The sequence spans 95 residues: Small ribosomal subunit protein bS6 (95 aa).

It belongs to the bacterial ribosomal protein bS6 family.

Its function is as follows. Binds together with bS18 to 16S ribosomal RNA. In Corynebacterium kroppenstedtii (strain DSM 44385 / JCM 11950 / CIP 105744 / CCUG 35717), this protein is Small ribosomal subunit protein bS6.